A 281-amino-acid chain; its full sequence is MAAGLITIKRRIQSITNTRKITKAMGLIATSTLRKARRNLDANLSYYSSFEDVMKKVSSGILGENIYTNGNGSKEKLYITMTSDAGLCGGFNGNVVNAAVSEISKDRENSLIMSVGQKGRGYFKRLQYDTIAEYVDIQNEPTLTEAKTISEHALSLYNKGEIGEINIVYSKFISTIKQDIIIKRVLPFDMKDIKYDGSIEFEPEINELIEGIVAVYLKSQLFNFLLNSKASEQASKMTAMDSATKNANELLDDLNLRYNRIRQSAITQEITEIVSGAEAQK.

It belongs to the ATPase gamma chain family. F-type ATPases have 2 components, CF(1) - the catalytic core - and CF(0) - the membrane proton channel. CF(1) has five subunits: alpha(3), beta(3), gamma(1), delta(1), epsilon(1). CF(0) has three main subunits: a, b and c.

Its subcellular location is the cell membrane. Produces ATP from ADP in the presence of a proton gradient across the membrane. The gamma chain is believed to be important in regulating ATPase activity and the flow of protons through the CF(0) complex. The chain is ATP synthase gamma chain from Clostridium pasteurianum.